We begin with the raw amino-acid sequence, 461 residues long: MQRTQIVDALAATAPQPVIRLCGWVRTRRDAKGFSFLEINDGSCLANIQAIVDEGIPAYANIGAVSTGAAVDITGELVESPGKGQKWEVRVQTLTLLGAADAETYPLQKKRHSDEFLRSIAHLRARTNKYGAAFRIRSEAAFAIHEFYRERGFFYVHTPILTGSDCEGAGEMFRVTTLPVEGSATPASGNRYENDFFGKECNLTVSGQLEAETLALGLGKVYTFGPTFRAENSNTPRHAAEFWMIEPEVAFADLEEDMNLAEDMTRTVVRRILDRCAADLDLFNRFVDTTLVERLRQIADEPFARCSYTEAIELLLKSGKKFEYPVSFGLDLQTEHERYLAEEHFGKPVIVYNYPKEIKAFYMRLNDDGRTVAAMDVLVPRIGELIGGSQREERLDVLEARINEMGQNLEDYWWYLDLRRFGSVPHAGFGMGFERLLMLLTGITNIRDVIPFPRTPGNLEF.

It belongs to the class-II aminoacyl-tRNA synthetase family. Homodimer.

It localises to the cytoplasm. It catalyses the reaction tRNA(Asn) + L-asparagine + ATP = L-asparaginyl-tRNA(Asn) + AMP + diphosphate + H(+). This is Asparagine--tRNA ligase from Nitratidesulfovibrio vulgaris (strain ATCC 29579 / DSM 644 / CCUG 34227 / NCIMB 8303 / VKM B-1760 / Hildenborough) (Desulfovibrio vulgaris).